A 372-amino-acid chain; its full sequence is 4-hydroxy-3-methylbut-2-en-1-yl diphosphate synthase (flavodoxin) (372 aa).

[4Fe-4S] cluster-binding residues include Cys-270, Cys-273, Cys-305, and Glu-312.

It belongs to the IspG family. Requires [4Fe-4S] cluster as cofactor.

It carries out the reaction (2E)-4-hydroxy-3-methylbut-2-enyl diphosphate + oxidized [flavodoxin] + H2O + 2 H(+) = 2-C-methyl-D-erythritol 2,4-cyclic diphosphate + reduced [flavodoxin]. Its pathway is isoprenoid biosynthesis; isopentenyl diphosphate biosynthesis via DXP pathway; isopentenyl diphosphate from 1-deoxy-D-xylulose 5-phosphate: step 5/6. Its function is as follows. Converts 2C-methyl-D-erythritol 2,4-cyclodiphosphate (ME-2,4cPP) into 1-hydroxy-2-methyl-2-(E)-butenyl 4-diphosphate. This chain is 4-hydroxy-3-methylbut-2-en-1-yl diphosphate synthase (flavodoxin), found in Marinobacter nauticus (strain ATCC 700491 / DSM 11845 / VT8) (Marinobacter aquaeolei).